The chain runs to 350 residues: MAQAGSADPGVGGHWAAGPRCAPWRWALALLWLATAAGGPSRRQWPVPYKRFSFRPEPDPYCQAKYTFCPTGSPIPVMKGDDVIEVFRLQTPVWEFKYGNLLGHLKIMHDAIGFKSTLTGKNYTMEWYELFQLGNCTFPHLRPEMNAPFWCNQGAACFFEGIDDIHWKENGTLVLVATISGNTFNQMAKWVKRDNETGIYYETWTVQASPTKGAETWFESYDCSKFVLRTYKKLAELGAEFKKIETNYTRIFLYSGEPTYLGNETSIFGPTGNKTLALAIKRFYYPFKPHLSTKEFLLSILQIFDAVIIHREFYLFYNFEYWFLPMKFPFIKITYEEIPLPKRNETLSGL.

Residues 1–25 (MAQAGSADPGVGGHWAAGPRCAPWR) lie on the Cytoplasmic side of the membrane. A helical; Signal-anchor for type II membrane protein membrane pass occupies residues 26–42 (WALALLWLATAAGGPSR). Residues 43-350 (RQWPVPYKRF…PKRNETLSGL (308 aa)) are Lumenal-facing. Intrachain disulfides connect Cys62/Cys151 and Cys69/Cys157. His109 (proton acceptor) is an active-site residue. Residues Asn122, Asn135, Asn170, and Asn195 are each glycosylated (N-linked (GlcNAc...) asparagine). Residue Cys223 is the Nucleophile; Acyl-thioester intermediate of the active site. N-linked (GlcNAc...) asparagine glycans are attached at residues Asn247, Asn263, and Asn273. The membrane-anchoring stretch occupies residues 296-335 (FLLSILQIFDAVIIHREFYLFYNFEYWFLPMKFPFIKITY). Asn344 is a glycosylation site (N-linked (GlcNAc...) asparagine).

The protein belongs to the CLN5 family. In terms of assembly, multimer. Interacts with SORT1, RAB5A and RAB7A. Interacts with PPT1, TPP1, CLN3, CLN6, CLN8, ATP5F1A and ATP5F1B. In terms of processing, N-glycosylated with both high mannose and complex type sugars. Glycosylation is important for proper folding and trafficking to the lysosomes. Post-translationally, the type II membrane signal anchor is proteolytically cleaved to produce a mature form that is transported to the lysosomes (Bis(monoacylglycero)phosphate synthase CLN5, secreted form). Can undergo proteolytic cleavage at the C-terminus, probably by a cysteine protease and may involve the removal of approximately 10-15 residues from the C-terminal end.

Its subcellular location is the lysosome. It is found in the membrane. The catalysed reaction is S-hexadecanoyl-L-cysteinyl-[protein] + H2O = L-cysteinyl-[protein] + hexadecanoate + H(+). It catalyses the reaction 2 1-acyl-sn-glycero-3-phospho-(1'-sn-glycerol) = 1-acyl-sn-glycero-3-phospho-(3'-acyl-sn-1'-glycerol) + sn-glycero-3-phospho-(1'-sn-glycerol). It carries out the reaction 2 1-(9Z-octadecenoyl)-sn-glycero-3-phospho-(1'-sn-glycerol) = 1-(9Z-octadecenoyl)-sn-glycero-3-phospho-(3'-(9Z-octadecenoyl)-1'-sn-glycerol) + sn-glycero-3-phospho-(1'-sn-glycerol). The enzyme catalyses 2 1-octadecanoyl-sn-glycero-3-phospho-(1'-sn-glycerol) = 1-octadecanoyl-sn-glycero-3-phospho-(3'-octadecanoyl-1'-sn-glycerol) + sn-glycero-3-phospho-(1'-sn-glycerol). The catalysed reaction is 2 1-hexadecanoyl-sn-glycero-3-phospho-(1'-sn-glycerol) = 1-hexadecanoyl-sn-glycero-3-phospho-(3'-hexadecanoyl-1'-sn-glycerol) + sn-glycero-3-phospho-(1'-sn-glycerol). It catalyses the reaction 2 1-tetradecanoyl-sn-glycero-3-phospho-(1'-sn-glycerol) = 1-tetradecanoyl-sn-glycero-3-phospho-(3'-tetradecanoyl-1'-sn-glycerol) + sn-glycero-3-phospho-(1'-sn-glycerol). Catalyzes the synthesis of bis(monoacylglycero)phosphate (BMP) via transacylation of 2 molecules of lysophosphatidylglycerol (LPG). BMP also known as lysobisphosphatidic acid plays a key role in the formation of intraluminal vesicles and in maintaining intracellular cholesterol homeostasis. Can use only LPG as the exclusive lysophospholipid acyl donor for base exchange and displays BMP synthase activity towards various LPGs (LPG 14:0, LPG 16:0, LPG 18:0, LPG 18:1) with a higher preference for longer chain lengths. Plays a role in influencing the retrograde trafficking of lysosomal sorting receptors SORT1 and IGF2R from the endosomes to the trans-Golgi network by controlling the recruitment of retromer complex to the endosomal membrane. Regulates the localization and activation of RAB7A which is required to recruit the retromer complex to the endosomal membrane. Its function is as follows. Exhibits palmitoyl protein thioesterase (S-depalmitoylation) activity in vitro and most likely plays a role in protein S-depalmitoylation. The protein is Bis(monoacylglycero)phosphate synthase CLN5 (CLN5) of Canis lupus familiaris (Dog).